The primary structure comprises 687 residues: Epithelial splicing regulatory protein 1 (687 aa).

RRM domains are found at residues 226–303, 327–407, and 446–526; these read TIIR…KATG, VIVR…RSTA, and DCIR…QCSA.

Belongs to the ESRP family.

It localises to the nucleus. In terms of biological role, mRNA splicing factor that regulates the formation of epithelial cell-specific isoforms. Specifically regulates the expression of FGFR2-IIIb, an epithelial cell-specific isoform of fgfr2. Acts by directly binding specific sequences in mRNAs. Binds the GU-rich sequence motifs in the ISE/ISS-3, a cis-element regulatory region present in the mRNA of fgfr2. This Xenopus tropicalis (Western clawed frog) protein is Epithelial splicing regulatory protein 1 (esrp1).